A 99-amino-acid polypeptide reads, in one-letter code: Aspartyl/glutamyl-tRNA(Asn/Gln) amidotransferase subunit C (99 aa).

The protein belongs to the GatC family. In terms of assembly, heterotrimer of A, B and C subunits.

The catalysed reaction is L-glutamyl-tRNA(Gln) + L-glutamine + ATP + H2O = L-glutaminyl-tRNA(Gln) + L-glutamate + ADP + phosphate + H(+). The enzyme catalyses L-aspartyl-tRNA(Asn) + L-glutamine + ATP + H2O = L-asparaginyl-tRNA(Asn) + L-glutamate + ADP + phosphate + 2 H(+). Functionally, allows the formation of correctly charged Asn-tRNA(Asn) or Gln-tRNA(Gln) through the transamidation of misacylated Asp-tRNA(Asn) or Glu-tRNA(Gln) in organisms which lack either or both of asparaginyl-tRNA or glutaminyl-tRNA synthetases. The reaction takes place in the presence of glutamine and ATP through an activated phospho-Asp-tRNA(Asn) or phospho-Glu-tRNA(Gln). This chain is Aspartyl/glutamyl-tRNA(Asn/Gln) amidotransferase subunit C, found in Cupriavidus necator (strain ATCC 17699 / DSM 428 / KCTC 22496 / NCIMB 10442 / H16 / Stanier 337) (Ralstonia eutropha).